Reading from the N-terminus, the 778-residue chain is MRPFQLDLLFLCFFLFSQELGLQKRGCCLVLGYMAKDKFRRMNEGQVYSFSQQPQDQVVVSGQPVTLLCAIPEYDGFVLWIKDGLALGVGRDLSSYPQYLVVGNHLSGEHHLKILRAELQDDAVYECQAIQAAIRSRPARLTVLVPPDDPIILGGPVISLRAGDPLNLTCHADNAKPAASIIWLRKGEVINGATYSKTLLRDGKRESIVSTLFISPGDVENGQSIVCRATNKAIPGGKETSVTIDIQHPPLVNLSVEPQPVLEDNIVTFHCSAKANPAVTQYRWAKRGHIIKEASGELYRTTVDYTYFSEPVSCEVTNALGSTNLSRTVDVYFGPRMTSEPQSLLVDLGSDAVFSCAWIGNPSLTIVWMKRGSGVVLSNEKTLTLKSVRQEDAGKYVCRAVVPRVGAGEREVTLTVNGPPIISSTQTQHALHGEKGQIKCFIRSTPPPDRIAWSWKENVLESGTSGRYTVETVNTEEGVISTLTISNIVRADFQTIYNCTAWNSFGSDTEIIRLKEQGSEMKSGAGLEAESVPMAVIIGVAVGAGVAFLVLMATIVAFCCARSQRNLKGVVSAKNDIRVEIVHKEPSSGREAEDHTTIKQLMMDRGEFQQDSVLKQLEVLKEEEKEFQNLKDPTNGYYSVNTFKEHHSTPTISLSSCQPDLRPTGKQRVPTGMSFTNIYSTLSGQGRLYDYGQRFVLGMGSSSIELCEREFQRGSLSDSSSFLDTQCDSSVSSSGKQDGYVQFDKASKASASSSHHSQSSSQNSDPSRPLQRRMQTHV.

A signal peptide spans 1 to 21; sequence MRPFQLDLLFLCFFLFSQELG. The Extracellular segment spans residues 22-535; sequence LQKRGCCLVL…GLEAESVPMA (514 aa). Ig-like C2-type domains are found at residues 48–142, 147–243, 249–330, 335–415, and 419–515; these read YSFS…ARLT, PDDP…TSVT, PPLV…RTVD, PRMT…VTLT, and PPII…IRLK. The cysteines at positions 69 and 127 are disulfide-linked. Residue asparagine 167 is glycosylated (N-linked (GlcNAc...) asparagine). The cysteines at positions 170 and 227 are disulfide-linked. Residue asparagine 253 is glycosylated (N-linked (GlcNAc...) asparagine). An intrachain disulfide couples cysteine 271 to cysteine 314. N-linked (GlcNAc...) asparagine glycosylation occurs at asparagine 324. 2 disulfides stabilise this stretch: cysteine 356-cysteine 398 and cysteine 440-cysteine 499. N-linked (GlcNAc...) asparagine glycosylation is present at asparagine 498. A helical membrane pass occupies residues 536–556; sequence VIIGVAVGAGVAFLVLMATIV. At 557–778 the chain is on the cytoplasmic side; it reads AFCCARSQRN…PLQRRMQTHV (222 aa). A compositionally biased stretch (polar residues) spans 727-736; that stretch reads CDSSVSSSGK. The interval 727 to 778 is disordered; sequence CDSSVSSSGKQDGYVQFDKASKASASSSHHSQSSSQNSDPSRPLQRRMQTHV. Over residues 748–762 the composition is skewed to low complexity; it reads KASASSSHHSQSSSQ.

It belongs to the immunoglobulin superfamily. As to quaternary structure, homodimer; mediates homophilic interactions to promote cell adhesion. Interacts with NPHS1; forms heterodimers with NPHS1. Interacts with NPHS2/podocin (via the C-terminus). Interacts with CASK. Interacts (via extracellular region) with MAP1B. Interacts (via extracellular region) with MYO16. Interacts (via intracellular region) with ATP1B1. Interacts (via intracellular region) with SHMT2. Interacts (via intracellular region) with UFC1. In terms of processing, undergoes proteolysis by a metalloprotease and gives rise to a soluble form. As to expression, expressed mainly in adult brain, bone marrow and stromal cells. Expressed in diverse regions of the brain, including the cortex, hippocampus, striatum, olfactory bulb and cerebellum. In brain, expressed in pontine nucleus neurons (at protein level). In hippocampus, produced in both the dentate granule neurons and the GABAergic neurons, but not the CA3 neurons. Expressed in subpopulations of vomeronasal sensory neurons. Expressed in a subset of neurons in dorsal root ganglia.

It localises to the cell membrane. Its subcellular location is the cell projection. It is found in the axon. The protein localises to the dendrite. The protein resides in the secreted. Synaptic adhesion molecule required for the formation of target-specific synapses. Required for formation of target-specific synapses at hippocampal mossy fiber synapses. Required for formation of mossy fiber filopodia, the synaptic structures connecting dentate granule and GABA neurons. Probably acts as a homophilic adhesion molecule that promotes trans-cellular interactions and stabilize mossy fiber filipodia contact and subsequent synapse formation. Required for the coalescence of vomeronasal sensory neuron axons. May be involved in the hematopoietic supportive capacity of stroma cells; the secreted extracellular domain is directly responsible for supporting hematopoietic stem cells. This is Kin of IRRE-like protein 3 (Kirrel3) from Mus musculus (Mouse).